The sequence spans 641 residues: MAGRINDEDVKAVRDAVPIDAVVSEYLQLRNAGGGNLKGLCPFHDEKSPSFQVSPSKGFFHCFGCQEGGDTITFVMKIDHLTFSEAVERLAGQAGITLRYEEGGYNPSHQRGERIRLVEAHKIAAQWYAEQLATGPEADTGRAFLADRGFDQAAAEHFGVGYSPQGWDHLTRFLRGKGFSDKELLLSGLSQEGRRGPIDRFRGRLMWPIRDIGGDVVGFGARKLYEADNGPKYLNTPDTAIYKKSQVLYGIDLAKKDIAKASRAVVVEGYTDVMACHLAGVTTAIATCGTAFGGDHIKILRRLLMDNGSARVIFTFDGDAAGQKAALRAFEDDQKFAAETYIAIAPDGMDPCDLRLAKGDDAVADLVEPRTPLFEFALRQIVARYDLDTPAGRAAALDEAAPVVARIKNSGAQHEVAVQLAGMLGILDTQFVVKRIAQLARWARDRGGKGPAPDQRQRGGGPQQQAGPMTATPRGPALNLRNPVFATERELLKLALQRPELVSPAFDAYGVDEFTAPPYAAVREAIMEAGGAEFGVQDPQDYLVRVREAAPDDTVRAMVTELAVEAIMLHRGVKGVDEVYAGAQLVTVRRRAVERRIRDITGRLTRLSGHGDPAELAAVQNELWILQQYDQNLREHGAAAL.

A CHC2-type zinc finger spans residues 41–65 (CPFHDEKSPSFQVSPSKGFFHCFGC). Positions 262–346 (SRAVVVEGYT…AAETYIAIAP (85 aa)) constitute a Toprim domain. Residues Glu-268, Asp-317, and Asp-319 each contribute to the Mg(2+) site. Residues 444 to 478 (RDRGGKGPAPDQRQRGGGPQQQAGPMTATPRGPAL) form a disordered region.

It belongs to the DnaG primase family. Monomer. Interacts with DnaB. Requires Zn(2+) as cofactor. Mg(2+) is required as a cofactor.

The catalysed reaction is ssDNA + n NTP = ssDNA/pppN(pN)n-1 hybrid + (n-1) diphosphate.. Its function is as follows. RNA polymerase that catalyzes the synthesis of short RNA molecules used as primers for DNA polymerase during DNA replication. In Streptomyces coelicolor (strain ATCC BAA-471 / A3(2) / M145), this protein is DNA primase.